Reading from the N-terminus, the 533-residue chain is 1-aminocyclopropane-1-carboxylate synthase 5 (533 aa).

At Lys-358 the chain carries N6-(pyridoxal phosphate)lysine.

The protein belongs to the class-I pyridoxal-phosphate-dependent aminotransferase family. It depends on pyridoxal 5'-phosphate as a cofactor. As to expression, expressed in shoots and leaf blades. Expressed at low levels in leaf sheaths. Expressed in vasculature of roots and shoots.

The catalysed reaction is S-adenosyl-L-methionine = 1-aminocyclopropane-1-carboxylate + S-methyl-5'-thioadenosine + H(+). Its pathway is alkene biosynthesis; ethylene biosynthesis via S-adenosyl-L-methionine; ethylene from S-adenosyl-L-methionine: step 1/2. Catalyzes the formation of 1-aminocyclopropane-1-carboxylate, a direct precursor of ethylene in higher plants. In Oryza sativa subsp. japonica (Rice), this protein is 1-aminocyclopropane-1-carboxylate synthase 5.